We begin with the raw amino-acid sequence, 162 residues long: uncharacterized protein (162 aa).

The N-terminal stretch at 1–18 (MRKTFLTLLCVSSAIAHA) is a signal peptide.

This sequence belongs to the fimbrial protein family.

Its function is as follows. Part of the yfcOPQRSUV fimbrial operon. Could contribute to adhesion to various surfaces in specific environmental niches. Increases adhesion to eukaryotic T24 bladder epithelial cells in the absence of fim genes. This is an uncharacterized protein from Escherichia coli (strain K12).